The chain runs to 105 residues: MEQFLSIGVNHFLTISVLLFSLGMFAVMTRKNAIVILMGVELILNAANINFLTFSKYNGGMEGVMFSLFVIVLAAAEAAVALAIVINIFKTFKTVDVSSVDTMKE.

Helical transmembrane passes span 7 to 27 (IGVN…MFAV), 34 to 54 (IVIL…FLTF), and 66 to 86 (FSLF…AIVI).

Belongs to the complex I subunit 4L family. As to quaternary structure, NDH-1 is composed of 14 different subunits. Subunits NuoA, H, J, K, L, M, N constitute the membrane sector of the complex.

It localises to the cell inner membrane. The enzyme catalyses a quinone + NADH + 5 H(+)(in) = a quinol + NAD(+) + 4 H(+)(out). Its function is as follows. NDH-1 shuttles electrons from NADH, via FMN and iron-sulfur (Fe-S) centers, to quinones in the respiratory chain. The immediate electron acceptor for the enzyme in this species is believed to be a menaquinone. Couples the redox reaction to proton translocation (for every two electrons transferred, four hydrogen ions are translocated across the cytoplasmic membrane), and thus conserves the redox energy in a proton gradient. This chain is NADH-quinone oxidoreductase subunit K, found in Chlorobaculum parvum (strain DSM 263 / NCIMB 8327) (Chlorobium vibrioforme subsp. thiosulfatophilum).